A 378-amino-acid polypeptide reads, in one-letter code: Anhydro-N-acetylmuramic acid kinase (378 aa).

Residue 23-30 (GTSMDGAD) participates in ATP binding.

This sequence belongs to the anhydro-N-acetylmuramic acid kinase family.

It carries out the reaction 1,6-anhydro-N-acetyl-beta-muramate + ATP + H2O = N-acetyl-D-muramate 6-phosphate + ADP + H(+). Its pathway is amino-sugar metabolism; 1,6-anhydro-N-acetylmuramate degradation. It functions in the pathway cell wall biogenesis; peptidoglycan recycling. Functionally, catalyzes the specific phosphorylation of 1,6-anhydro-N-acetylmuramic acid (anhMurNAc) with the simultaneous cleavage of the 1,6-anhydro ring, generating MurNAc-6-P. Is required for the utilization of anhMurNAc either imported from the medium or derived from its own cell wall murein, and thus plays a role in cell wall recycling. The polypeptide is Anhydro-N-acetylmuramic acid kinase (Bordetella pertussis (strain Tohama I / ATCC BAA-589 / NCTC 13251)).